A 1476-amino-acid chain; its full sequence is ABC transporter G family member 17 (1476 aa).

Disordered regions lie at residues 13 to 45 and 68 to 91; these read SENN…YDYD and FREI…KPEN. A coiled-coil region spans residues 14–67; it reads ENNNNNNNNNNNNNNNNNNNLNNNNDNDYDYDSINNIEEKFENVSKELEGQSIK. Positions 15 to 39 are enriched in low complexity; it reads NNNNNNNNNNNNNNNNNNNLNNNND. The 252-residue stretch at 151 to 402 folds into the ABC transporter 1 domain; that stretch reads LNPFNYFKKD…FLDLGFDCEP (252 aa). Residues 507–751 form the ABC transmembrane type-2 1 domain; the sequence is WGDKFTLTSR…SLSVKGENYL (245 aa). Helical transmembrane passes span 517–537, 547–567, 592–612, 623–643, and 764–784; these read FLTI…QPLT, AIFT…HGAL, ILID…IVYF, FFIF…LFRG, and LNVV…LFAV. The 245-residue stretch at 838–1082 folds into the ABC transporter 2 domain; that stretch reads FSWKSISYTV…LTSYFERHGV (245 aa). Position 874-881 (874-881) interacts with ATP; sequence GSSGAGKT. Transmembrane regions (helical) follow at residues 1182 to 1202, 1219 to 1239, 1260 to 1280, 1298 to 1318, 1322 to 1342, and 1450 to 1470; these read FYTM…GFTF, SWEA…MFFI, LSMI…FFIA, WLMH…LGAA, IAIS…LCGV, and FGII…FVYL. The 224-residue stretch at 1182-1405 folds into the ABC transmembrane type-2 2 domain; that stretch reads FYTMGSFAQS…TDCQTYSAPF (224 aa).

The protein belongs to the ABC transporter superfamily. ABCG family. PDR (TC 3.A.1.205) subfamily.

Its subcellular location is the membrane. This chain is ABC transporter G family member 17 (abcG17-1), found in Dictyostelium discoideum (Social amoeba).